Consider the following 204-residue polypeptide: Imidazoleglycerol-phosphate dehydratase (204 aa).

Belongs to the imidazoleglycerol-phosphate dehydratase family.

The protein localises to the cytoplasm. It catalyses the reaction D-erythro-1-(imidazol-4-yl)glycerol 3-phosphate = 3-(imidazol-4-yl)-2-oxopropyl phosphate + H2O. It functions in the pathway amino-acid biosynthesis; L-histidine biosynthesis; L-histidine from 5-phospho-alpha-D-ribose 1-diphosphate: step 6/9. In Rhodococcus opacus (strain B4), this protein is Imidazoleglycerol-phosphate dehydratase.